The primary structure comprises 451 residues: Chromosomal replication initiator protein DnaA (451 aa).

The segment at 1–77 is domain I, interacts with DnaA modulators; sequence MTENEQIFWN…EVYNAQISVD (77 aa). Residues 77 to 110 are domain II; that stretch reads DYVFEEDLMIEQNQTKINQKPKQQALNSLPTVTS. A domain III, AAA+ region region spans residues 111–329; the sequence is DLNSKYSFEN…GALKDISLGA (219 aa). ATP contacts are provided by G155, G157, K158, and T159. The interval 330 to 451 is domain IV, binds dsDNA; it reads NFKQIDTITV…EIETIKNKIK (122 aa).

This sequence belongs to the DnaA family. As to quaternary structure, oligomerizes as a right-handed, spiral filament on DNA at oriC.

The protein resides in the cytoplasm. Functionally, plays an essential role in the initiation and regulation of chromosomal replication. ATP-DnaA binds to the origin of replication (oriC) to initiate formation of the DNA replication initiation complex once per cell cycle. Binds the DnaA box (a 9 base pair repeat at the origin) and separates the double-stranded (ds)DNA. Forms a right-handed helical filament on oriC DNA; dsDNA binds to the exterior of the filament while single-stranded (ss)DNA is stabiized in the filament's interior. The ATP-DnaA-oriC complex binds and stabilizes one strand of the AT-rich DNA unwinding element (DUE), permitting loading of DNA polymerase. After initiation quickly degrades to an ADP-DnaA complex that is not apt for DNA replication. Binds acidic phospholipids. This Streptococcus pyogenes serotype M49 (strain NZ131) protein is Chromosomal replication initiator protein DnaA.